The sequence spans 158 residues: 18.1 kDa class I heat shock protein (158 aa).

Residues 44–158 (ENPAFVSTRV…AEVKSIEISG (115 aa)) enclose the sHSP domain.

Belongs to the small heat shock protein (HSP20) family. As to quaternary structure, forms oligomeric structures.

The protein resides in the cytoplasm. The polypeptide is 18.1 kDa class I heat shock protein (HSP18.1) (Pisum sativum (Garden pea)).